Reading from the N-terminus, the 344-residue chain is MRVIRPVEHADIAALMQLAGKTGGGLTSLLANEATLAARIERALKTWSGELPKGEQGYVFVLEDSETGEVGGICAIEVAVGLNDPWYNYRVGTLVHASKELNVYNALPTLFLSNDHTGSSELCTLFLDPEWRKEGNGYLLSKSRFMFMAAFRDKFNEKVVAEMRGVIDEHGYSPFWQSLGKRFFSMDFSRADFLCGTGQKAFIAELMPKHPIYTHFLSEEAQAVIGEVHPQTAPARVVLEKEGFRYRHYIDIFDGGPTLECDIDRVRAIRKSRLVEVAEGQPALGDYPACLVANENYHHFRAALVRADPQTSRLVLTAAQLDALKCRAGDHVRLVRLCAEEKTV.

A succinyl-CoA-binding site is contributed by leucine 125. Histidine 229 (proton donor) is an active-site residue.

Belongs to the arginine N-succinyltransferase family.

The catalysed reaction is succinyl-CoA + L-arginine = N(2)-succinyl-L-arginine + CoA + H(+). It functions in the pathway amino-acid degradation; L-arginine degradation via AST pathway; L-glutamate and succinate from L-arginine: step 1/5. Catalyzes the transfer of succinyl-CoA to arginine to produce N(2)-succinylarginine. The sequence is that of Arginine N-succinyltransferase from Salmonella typhi.